Reading from the N-terminus, the 91-residue chain is Small ribosomal subunit protein uS19 (91 aa).

It belongs to the universal ribosomal protein uS19 family.

Functionally, protein S19 forms a complex with S13 that binds strongly to the 16S ribosomal RNA. In Cupriavidus pinatubonensis (strain JMP 134 / LMG 1197) (Cupriavidus necator (strain JMP 134)), this protein is Small ribosomal subunit protein uS19.